The chain runs to 454 residues: Protein IQ-DOMAIN 1 (454 aa).

The interval Gly-103–Leu-113 is calmodulin-binding. Residues Glu-107–Leu-136 enclose the IQ domain. The interval Trp-272–Pro-454 is disordered. Positions Asn-280–Arg-328 are enriched in polar residues. Residues Lys-343–Arg-356 are compositionally biased toward basic and acidic residues. Residues Leu-371–Ser-388 are compositionally biased toward polar residues. The segment covering Thr-397 to Ser-412 has biased composition (low complexity). The short motif at Lys-421–Ala-428 is the Nuclear localization signal element. The segment covering Lys-442 to Pro-454 has biased composition (basic and acidic residues).

It belongs to the IQD family. As to quaternary structure, binds to multiple calmodulin (CaM) in the presence of Ca(2+)(e.g. CaM1 and CaM2) and CaM-like (e.g. CML8 and CML9) proteins. Interacts with KLCR1. In terms of tissue distribution, expressed in roots, flowers, stems, siliques, inflorescence stems and whole shoots. Restricted to the vascular bundles.

It is found in the nucleus. Its subcellular location is the nucleolus. It localises to the cytoplasm. The protein localises to the cytoskeleton. Functionally, may be involved in cooperative interactions with calmodulins or calmodulin-like proteins. Modulates expression of glucosinolate pathway genes. May associate with nucleic acids and regulate gene expression at the transcriptional or post-transcriptional level. Recruits KLCR1 and calmodulin proteins to microtubules, thus being a potential scaffold in cellular signaling and trafficking. The polypeptide is Protein IQ-DOMAIN 1 (Arabidopsis thaliana (Mouse-ear cress)).